Reading from the N-terminus, the 111-residue chain is Large ribosomal subunit protein uL24 (111 aa).

Residues 85–111 (NTNDPRRKDIINRKASRQKEEQGGKAQ) form a disordered region. A compositionally biased stretch (basic and acidic residues) spans 88–111 (DPRRKDIINRKASRQKEEQGGKAQ).

The protein belongs to the universal ribosomal protein uL24 family. Part of the 50S ribosomal subunit.

One of two assembly initiator proteins, it binds directly to the 5'-end of the 23S rRNA, where it nucleates assembly of the 50S subunit. Its function is as follows. Located at the polypeptide exit tunnel on the outside of the subunit. The protein is Large ribosomal subunit protein uL24 of Metallosphaera sedula (strain ATCC 51363 / DSM 5348 / JCM 9185 / NBRC 15509 / TH2).